The chain runs to 185 residues: Adenine phosphoribosyltransferase (185 aa).

It belongs to the purine/pyrimidine phosphoribosyltransferase family. Homodimer.

The protein resides in the cytoplasm. The enzyme catalyses AMP + diphosphate = 5-phospho-alpha-D-ribose 1-diphosphate + adenine. The protein operates within purine metabolism; AMP biosynthesis via salvage pathway; AMP from adenine: step 1/1. In terms of biological role, catalyzes a salvage reaction resulting in the formation of AMP, that is energically less costly than de novo synthesis. In Aliarcobacter butzleri (strain RM4018) (Arcobacter butzleri), this protein is Adenine phosphoribosyltransferase.